The chain runs to 172 residues: Putative phosphoesterase BcerKBAB4_1135 (172 aa).

The active-site Proton donor is the His-34. 2 short sequence motifs (HXTX) span residues 34–37 and 115–118; these read HITL and HLTI. His-115 serves as the catalytic Proton acceptor.

The protein belongs to the 2H phosphoesterase superfamily. YjcG family.

In Bacillus mycoides (strain KBAB4) (Bacillus weihenstephanensis), this protein is Putative phosphoesterase BcerKBAB4_1135.